Consider the following 493-residue polypeptide: FAD-linked oxidoreductase tazL (493 aa).

An N-terminal signal peptide occupies residues 1-17; it reads MRSNTVILAALPLVASA. N-linked (GlcNAc...) asparagine glycans are attached at residues N29, N41, N53, N91, N253, N318, and N387. Positions 63–235 constitute an FAD-binding PCMH-type domain; sequence WAEPTFAVTI…TSATYEIFDA (173 aa).

This sequence belongs to the oxygen-dependent FAD-linked oxidoreductase family.

It participates in secondary metabolite biosynthesis. Its function is as follows. FAD-linked oxidoreductase; part of the gene cluster that mediates the biosynthesis of azaterrilone A and other azaphilones, a class of fungal metabolites characterized by a highly oxygenated pyrano-quinone bicyclic core and exhibiting a broad range of bioactivities. The first step of the pathway begins with the non-reducing polyketide synthase tazA that assembles one acetyl-CoA starter unit, five malonyl-CoA units, and catalyzes a series of Claisen condensations, methylation, PT-mediated cyclization, and finally releases the first hexaketide precursor through the R-domain. The tazA product then undergoes reduction on its terminal ketone and the following pyran-ring formation by yet undetermined enzyme(s). Dehydration and enoyl reduction, possibly involving the trans-enoyl reductase tazE leads to the next intermediate. TazD is predicted as an acetyltransferase and might catalyze the acetylation steps leading to the synthesis of azaterrilone A. Azaterrilone A is not the final product of the taz pathway and both the highly reducing polyketide synthase tazB and the dual enzyme tazHJ catalyze late steps of the pathway, leading to the production of the 2 final stereoisomers that contain additional polyketide modification whose structures have still to be determined. The sequence is that of FAD-linked oxidoreductase tazL from Aspergillus terreus (strain NIH 2624 / FGSC A1156).